We begin with the raw amino-acid sequence, 532 residues long: MATPSAIPTNSKRDTTAQFHRVTRGNRSLWYQLTVLQQPERARACGSGMKANSDRRPVDPPPVVELRIVEGPTLEEGKDVTFDYNANFFLYASLEHARPIASCRVSTPTTNNPPILTGVPASGMAYLDRPSEAGYFIFPDLSVRHEGLYRLTFSLFETTKEEQDFDIQPADGDLPPGVDFRMEIKTDPFSVFSAKKFPGLMESTQLSKTVADQGCRVRIRRDVRMRKRDTKSGGNNNNNNNAGNNAGNNGFERREEDFGRRRTVTPAAEDPHGIRNRSQSNSSEHRASYSDVSRRPSMVDSYPPPPPPPPSYDPTPSAPRHLAFGESSGPKYPAPRQYAHQPGLQITPVPANGPYPSAAQSPYAKTDAPYGYSRHLPPSCPSPAPSVNRDLYDRRQSTSTYVPPSPSVYSTEGHYRRDSQASYPPTPAAAPLPRMNTEPSRGSIKISALVEPMPVIEPQVDPLPELPPVNVGGKRKHESVFAQNTRPLFNGQRQMDPHYGRSHRGYSPDHDQGSYSRADGQISVIQFNKYEY.

One can recognise a Velvet domain in the interval 26 to 220; that stretch reads NRSLWYQLTV…ADQGCRVRIR (195 aa). Positions 40-45 match the Nuclear localization signal motif; the sequence is ERARAC. Positions 217-229 are enriched in basic residues; sequence VRIRRDVRMRKRD. 2 disordered regions span residues 217–440 and 458–520; these read VRIR…TEPS and PQVD…RADG. Residues 233–250 are compositionally biased toward low complexity; that stretch reads GGNNNNNNNAGNNAGNNG. Composition is skewed to basic and acidic residues over residues 251–260 and 283–294; these read FERREEDFGR and SEHRASYSDVSR. Pro residues predominate over residues 302-317; the sequence is YPPPPPPPPSYDPTPS. Over residues 397-411 the composition is skewed to low complexity; the sequence is STSTYVPPSPSVYST. The PEST stretch occupies residues 435 to 463; sequence MNTEPSRGSIKISALVEPMPVIEPQVDPL. The span at 481–493 shows a compositional bias: polar residues; it reads FAQNTRPLFNGQR.

This sequence belongs to the velvet family. VeA subfamily. Component of the heterotrimeric velvet complex composed of laeA, ve1 and velB; Ve1 acting as a bridging protein between laeA and velB. Interacts directly with laeA and velB.

Its subcellular location is the nucleus. The protein localises to the cytoplasm. In terms of biological role, component of the velvet transcription factor complex that controls sexual/asexual developmental ratio in response to light, promoting sexual development in the darkness while stimulating asexual sporulation under illumination. The velvet complex hat acts as a global regulator for secondary metabolite gene expression. Controls the expression of the aurofusarin and trichothecene gene clusters. Also controls the expression of the deoxynivalenol (DON) gene cluster. Regulates hyphal growth and pigment formation. Acts as a positive regulator of virulence. The chain is Developmental and secondary metabolism regulator ve1 from Gibberella zeae (strain ATCC MYA-4620 / CBS 123657 / FGSC 9075 / NRRL 31084 / PH-1) (Wheat head blight fungus).